The sequence spans 279 residues: MAVNVDAEYLKEIEKTRRDLRALISSRNCAPIMLRLAWHDAGTYDAKKKTGGANGSIRFKEELNRPHNKGLEKAVAFCEEVKAKHPRVSYADLYQLAGVVAVEVTGGPAIPFTPGRKDADSADDGELPNPNEGASHLRTLFSRMGLLDRDIVALSGGHTLGRAHKERSDFEGPWTQDPLKFDNSYFVELLKGETPGLLQLKTDKALLDDPKFHPFVKLYAKDEDMFFKAYAISHKKLSELGFNPPRRIPSAVTQQTLGIAVAAAVVIFTICYEASRRGK.

His39 serves as the catalytic Proton acceptor. The disordered stretch occupies residues 111–134 (PFTPGRKDADSADDGELPNPNEGA). A heme b-binding site is contributed by His158. Positions 159, 175, and 182 each coordinate K(+). The chain crosses the membrane as a helical span at residues 251-271 (AVTQQTLGIAVAAAVVIFTIC). The short motif at 272–279 (YEASRRGK) is the AKR2A-binding sequence (ABS) required for peroxisome membrane targeting element.

This sequence belongs to the peroxidase family. Ascorbate peroxidase subfamily. Interacts with AKR2A and AKR2B. The cofactor is heme b.

The protein localises to the peroxisome membrane. The enzyme catalyses L-ascorbate + H2O2 = L-dehydroascorbate + 2 H2O. Its function is as follows. Plays a key role in hydrogen peroxide removal. This Arabidopsis thaliana (Mouse-ear cress) protein is L-ascorbate peroxidase 5, peroxisomal (APX5).